The sequence spans 380 residues: Cytochrome b (380 aa).

4 consecutive transmembrane segments (helical) span residues 34–54, 78–99, 114–134, and 179–199; these read FGSL…LLAA, WLIR…YMHV, WNTG…GYVL, and FFTL…IHLT. Heme b-binding residues include histidine 84 and histidine 98. Heme b contacts are provided by histidine 183 and histidine 197. Histidine 202 provides a ligand contact to a ubiquinone. Helical transmembrane passes span 227–247, 289–309, 321–341, and 348–368; these read LKDI…ALFS, LGGV…PLLH, LSQL…WVGS, and FMII…ILFP.

The protein belongs to the cytochrome b family. As to quaternary structure, the cytochrome bc1 complex contains 11 subunits: 3 respiratory subunits (MT-CYB, CYC1 and UQCRFS1), 2 core proteins (UQCRC1 and UQCRC2) and 6 low-molecular weight proteins (UQCRH/QCR6, UQCRB/QCR7, UQCRQ/QCR8, UQCR10/QCR9, UQCR11/QCR10 and a cleavage product of UQCRFS1). This cytochrome bc1 complex then forms a dimer. Requires heme b as cofactor.

Its subcellular location is the mitochondrion inner membrane. Component of the ubiquinol-cytochrome c reductase complex (complex III or cytochrome b-c1 complex) that is part of the mitochondrial respiratory chain. The b-c1 complex mediates electron transfer from ubiquinol to cytochrome c. Contributes to the generation of a proton gradient across the mitochondrial membrane that is then used for ATP synthesis. This chain is Cytochrome b (MT-CYB), found in Balearica pavonina (Black crowned-crane).